The following is a 492-amino-acid chain: Dipeptide and tripeptide permease A (492 aa).

Residues 1–20 lie on the Cytoplasmic side of the membrane; that stretch reads MSTANKHPEAASLNAFKQPR. A helical transmembrane segment spans residues 21–43; the sequence is SFYLIFSIELWERFGYYGLQGIM. At 44-58 the chain is on the periplasmic side; the sequence is AVYLVKMLGMSEAQS. The chain crosses the membrane as a helical span at residues 59–79; it reads ITLFASFSALVYGLIAVGGWL. Topologically, residues 80–88 are cytoplasmic; it reads GDKVLGTKR. The chain crosses the membrane as a helical span at residues 89 to 109; it reads VIVLGTLVLALGYALVAWSGH. A topological domain (periplasmic) is located at residue aspartate 110. A helical membrane pass occupies residues 111-131; it reads IAMIYFGMATIAVGNGLFKAN. Over 132-152 the chain is Cytoplasmic; sequence PSSLLSTCYEKDDPRLDGAFT. Residues 153–173 traverse the membrane as a helical segment; it reads MYYMAINIGSFFSMLATPWLA. The Periplasmic segment spans residues 174 to 178; it reads AQFGW. Residues 179 to 199 traverse the membrane as a helical segment; it reads STAFGLSFVGMLITLVNFMFF. Residues 200 to 217 lie on the Cytoplasmic side of the membrane; it reads RKWVKDHGSKPDFAPLNM. The helical transmembrane segment at 218 to 238 threads the bilayer; the sequence is GKLLVTLLGIAVMIAAATWLL. Over 239–245 the chain is Periplasmic; it reads HNQDIAR. A helical transmembrane segment spans residues 246–266; sequence MVLGAVAVAIVVIFTKEALTL. Residues 267–273 are Cytoplasmic-facing; sequence KGAARRK. A helical membrane pass occupies residues 274-294; sequence MIVAFLLMLEAIVFFVLYMQM. The Periplasmic segment spans residues 295 to 319; the sequence is PTSLNFFAIRNVEHSLLGIAFQPEQ. A helical membrane pass occupies residues 320–340; that stretch reads FQALNPFWIMIFSPLLAALYN. At 341-351 the chain is on the cytoplasmic side; the sequence is KLGDRMPMPHK. The helical transmembrane segment at 352–372 threads the bilayer; sequence FALGMVLCSAAFLVLPLGASL. At 373 to 377 the chain is on the periplasmic side; sequence ANKMG. A helical transmembrane segment spans residues 378–398; sequence IVSVGWLVLSYALQSVGELMI. The Cytoplasmic segment spans residues 399-413; the sequence is SGLGLAMVAQLVPQR. The chain crosses the membrane as a helical span at residues 414–434; sequence LMGFIMGSWFLTTAGAAMVAG. The Periplasmic portion of the chain corresponds to 435–458; sequence KVANLMAVPENITNPLLSLHVYGD. A helical transmembrane segment spans residues 459–479; the sequence is IFFKIGITTGVIAVLMILAAP. Residues 480–492 lie on the Cytoplasmic side of the membrane; sequence LLNRMTQDEQPGV.

The protein belongs to the major facilitator superfamily. Proton-dependent oligopeptide transporter (POT/PTR) (TC 2.A.17) family. DtpA subfamily.

The protein localises to the cell inner membrane. In terms of biological role, proton-dependent permease that transports di- and tripeptides. The chain is Dipeptide and tripeptide permease A from Erwinia pyrifoliae (strain DSM 12163 / CIP 106111 / Ep16/96).